We begin with the raw amino-acid sequence, 223 residues long: MWGYTVEKGWFHVKHEEIESIASHVFGGNVDKAYAYHELLATDGSTRGFIGPREVPKLWSRHLLNCAVIGEAMDENIRVADIGSGAGLPGIPLAIARPDLTITLIEPLLKRSVFLGEVKEKLELDNVTVIRGRAEEKAVREQLGLVDVATSRAVAPLGKLAGWSLPLVRLGGKMIAMKGSSVHEELERDEKMIWKAGGGKVKIFSVGEVLEEPTTLISIRKVR.

Residues Gly-83, Leu-88, 134 to 135 (AE), and Arg-152 contribute to the S-adenosyl-L-methionine site.

The protein belongs to the methyltransferase superfamily. RNA methyltransferase RsmG family.

Its subcellular location is the cytoplasm. Functionally, specifically methylates the N7 position of guanine in position 518 of 16S rRNA. In Corynebacterium diphtheriae (strain ATCC 700971 / NCTC 13129 / Biotype gravis), this protein is Ribosomal RNA small subunit methyltransferase G.